The following is a 152-amino-acid chain: UPF0225 protein YchJ (152 aa).

It belongs to the UPF0225 family.

The protein is UPF0225 protein YchJ of Escherichia coli O7:K1 (strain IAI39 / ExPEC).